A 205-amino-acid chain; its full sequence is uncharacterized protein (205 aa).

This is an uncharacterized protein from Sinorhizobium fredii (strain NBRC 101917 / NGR234).